The following is a 120-amino-acid chain: Phosphoribosyl-AMP cyclohydrolase (120 aa).

Residue Asp-74 participates in Mg(2+) binding. Cys-75 contacts Zn(2+). Mg(2+) contacts are provided by Asp-76 and Asp-78. Zn(2+) is bound by residues Cys-91 and Cys-98.

It belongs to the PRA-CH family. In terms of assembly, homodimer. The cofactor is Mg(2+). It depends on Zn(2+) as a cofactor.

The protein localises to the cytoplasm. The enzyme catalyses 1-(5-phospho-beta-D-ribosyl)-5'-AMP + H2O = 1-(5-phospho-beta-D-ribosyl)-5-[(5-phospho-beta-D-ribosylamino)methylideneamino]imidazole-4-carboxamide. It functions in the pathway amino-acid biosynthesis; L-histidine biosynthesis; L-histidine from 5-phospho-alpha-D-ribose 1-diphosphate: step 3/9. Its function is as follows. Catalyzes the hydrolysis of the adenine ring of phosphoribosyl-AMP. The protein is Phosphoribosyl-AMP cyclohydrolase of Natronomonas pharaonis (strain ATCC 35678 / DSM 2160 / CIP 103997 / JCM 8858 / NBRC 14720 / NCIMB 2260 / Gabara) (Halobacterium pharaonis).